We begin with the raw amino-acid sequence, 389 residues long: Chalcone synthase 2 (389 aa).

55–62 lines the CoA pocket; the sequence is KFQRMCDK. C164 functions as the Acyl-thioester intermediate in the catalytic mechanism. Substrate is bound by residues T197 and 216-217; that span reads GD. A308 serves as a coordination point for CoA.

It belongs to the thiolase-like superfamily. Chalcone/stilbene synthases family. In terms of assembly, homodimer.

The enzyme catalyses (E)-4-coumaroyl-CoA + 3 malonyl-CoA + 3 H(+) = 2',4,4',6'-tetrahydroxychalcone + 3 CO2 + 4 CoA. It participates in secondary metabolite biosynthesis; flavonoid biosynthesis. Its function is as follows. The primary product of this enzyme is 4,2',4',6'-tetrahydroxychalcone (also termed naringenin-chalcone or chalcone) which can under specific conditions spontaneously isomerize into naringenin. This chain is Chalcone synthase 2 (CHS2), found in Medicago sativa (Alfalfa).